A 444-amino-acid polypeptide reads, in one-letter code: Coagulation factor VII (444 aa).

The N-terminal stretch at 1 to 21 is a signal peptide; that stretch reads MAPQARGLGLCSLLALQASLA. The propeptide occupies 22-39; it reads AVFITQEEAHSVLRRQRR. A Gla domain is found at 40 to 84; that stretch reads ANSFLEELRPGSLERECKEELCSFEEAREVFQSTERTKQFWITYN. Glu-45, Glu-46, Glu-53, Glu-55, Glu-58, Glu-59, Glu-64, Glu-65, Glu-68, and Glu-74 each carry 4-carboxyglutamate. Cys-56 and Cys-61 form a disulfide bridge. One can recognise an EGF-like 1; calcium-binding domain in the interval 85–121; that stretch reads DGDQCASNPCQNGGSCEDQIQSYICFCLADFEGRNCE. Disulfide bonds link Cys-89–Cys-100, Cys-94–Cys-109, Cys-111–Cys-120, Cys-130–Cys-141, Cys-137–Cys-151, Cys-153–Cys-166, Cys-174–Cys-301, Cys-198–Cys-203, and Cys-217–Cys-233. Residue Ser-91 is glycosylated (O-linked (Glc...) serine; alternate). An O-linked (Xyl...) serine; alternate glycan is attached at Ser-91. O-linked (Fuc) serine glycosylation is present at Ser-99. Residue Asp-102 is modified to (3R)-3-hydroxyaspartate. Residues 126 to 167 form the EGF-like 2 domain; sequence DQLICMYENGGCEQYCSDHVGSQRSCRCHEGYTLLPNGVSCT. Residues 192–431 enclose the Peptidase S1 domain; sequence IVGGKVCPKG…YTEWLSRLMR (240 aa). N-linked (GlcNAc...) asparagine glycosylation occurs at Asn-211. His-232 serves as the catalytic Charge relay system. A glycan (N-linked (GlcNAc...) asparagine) is linked at Asn-242. Asp-281 acts as the Charge relay system in catalysis. An N-linked (GlcNAc...) asparagine glycan is attached at Asn-306. Cys-349 and Cys-368 are oxidised to a cystine. Substrate is bound at residue Asp-377. A disulfide bridge connects residues Cys-379 and Cys-407. The active-site Charge relay system is Ser-383.

Belongs to the peptidase S1 family. In terms of assembly, heterodimer of a light chain and a heavy chain linked by a disulfide bond. Post-translationally, the vitamin K-dependent, enzymatic carboxylation of some glutamate residues allows the modified protein to bind calcium. In terms of processing, the iron and 2-oxoglutarate dependent 3-hydroxylation of aspartate and asparagine is (R) stereospecific within EGF domains. O-glycosylated. O-fucosylated by POFUT1 on a conserved serine or threonine residue found in the consensus sequence C2-X(4,5)-[S/T]-C3 of EGF domains, where C2 and C3 are the second and third conserved cysteines. Post-translationally, can be either O-glucosylated or O-xylosylated at Ser-91 by POGLUT1. In terms of tissue distribution, plasma.

The protein localises to the secreted. It catalyses the reaction Selective cleavage of Arg-|-Ile bond in factor X to form factor Xa.. In terms of biological role, initiates the extrinsic pathway of blood coagulation. Serine protease that circulates in the blood in a zymogen form. Factor VII is converted to factor VIIa by factor Xa, factor XIIa, factor IXa, or thrombin by minor proteolysis. In the presence of tissue factor and calcium ions, factor VIIa then converts factor X to factor Xa by limited proteolysis. Factor VIIa also converts factor IX to factor IXa in the presence of tissue factor and calcium. In Oryctolagus cuniculus (Rabbit), this protein is Coagulation factor VII (F7).